The sequence spans 504 residues: Histidine ammonia-lyase (504 aa).

Positions 141–143 (ASG) form a cross-link, 5-imidazolinone (Ala-Gly). S142 is modified (2,3-didehydroalanine (Ser)).

It belongs to the PAL/histidase family. In terms of processing, contains an active site 4-methylidene-imidazol-5-one (MIO), which is formed autocatalytically by cyclization and dehydration of residues Ala-Ser-Gly.

The protein resides in the cytoplasm. It catalyses the reaction L-histidine = trans-urocanate + NH4(+). It functions in the pathway amino-acid degradation; L-histidine degradation into L-glutamate; N-formimidoyl-L-glutamate from L-histidine: step 1/3. In Geobacillus thermodenitrificans (strain NG80-2), this protein is Histidine ammonia-lyase.